The chain runs to 188 residues: Archaemetzincin (188 aa).

H137 provides a ligand contact to Zn(2+). The active-site Proton acceptor is E138. Zn(2+) contacts are provided by H141, H147, C148, C153, C172, and C175.

Belongs to the peptidase M54 family. Monomer. The cofactor is Zn(2+).

Probable zinc metalloprotease whose natural substrate is unknown. The protein is Archaemetzincin of Pyrococcus horikoshii (strain ATCC 700860 / DSM 12428 / JCM 9974 / NBRC 100139 / OT-3).